Here is a 535-residue protein sequence, read N- to C-terminus: CTP synthase (535 aa).

Residues 1–267 form an amidoligase domain region; the sequence is MTKYIFVTGG…DKLVCDHMKL (267 aa). S13 contributes to the CTP binding site. S13 provides a ligand contact to UTP. 14–19 contributes to the ATP binding site; sequence SLGKGI. Y54 provides a ligand contact to L-glutamine. ATP is bound at residue D71. Mg(2+)-binding residues include D71 and E141. Residues 148 to 150, 188 to 193, and K224 each bind CTP; these read DIE and KTKPTQ. UTP-binding positions include 188 to 193 and K224; that span reads KTKPTQ. The Glutamine amidotransferase type-1 domain maps to 292–534; sequence TISLVGKYVE…IGASVQAAEQ (243 aa). G354 contributes to the L-glutamine binding site. The Nucleophile; for glutamine hydrolysis role is filled by C381. L-glutamine contacts are provided by residues 382–385, E405, and R462; that span reads LGMQ. Active-site residues include H507 and E509.

This sequence belongs to the CTP synthase family. In terms of assembly, homotetramer.

It catalyses the reaction UTP + L-glutamine + ATP + H2O = CTP + L-glutamate + ADP + phosphate + 2 H(+). The enzyme catalyses L-glutamine + H2O = L-glutamate + NH4(+). It carries out the reaction UTP + NH4(+) + ATP = CTP + ADP + phosphate + 2 H(+). It participates in pyrimidine metabolism; CTP biosynthesis via de novo pathway; CTP from UDP: step 2/2. Its activity is regulated as follows. Allosterically activated by GTP, when glutamine is the substrate; GTP has no effect on the reaction when ammonia is the substrate. The allosteric effector GTP functions by stabilizing the protein conformation that binds the tetrahedral intermediate(s) formed during glutamine hydrolysis. Inhibited by the product CTP, via allosteric rather than competitive inhibition. Catalyzes the ATP-dependent amination of UTP to CTP with either L-glutamine or ammonia as the source of nitrogen. Regulates intracellular CTP levels through interactions with the four ribonucleotide triphosphates. The sequence is that of CTP synthase from Bacillus velezensis (strain DSM 23117 / BGSC 10A6 / LMG 26770 / FZB42) (Bacillus amyloliquefaciens subsp. plantarum).